We begin with the raw amino-acid sequence, 251 residues long: Imidazole glycerol phosphate synthase subunit HisF (251 aa).

Active-site residues include Asp11 and Asp130.

Belongs to the HisA/HisF family. Heterodimer of HisH and HisF.

The protein resides in the cytoplasm. The catalysed reaction is 5-[(5-phospho-1-deoxy-D-ribulos-1-ylimino)methylamino]-1-(5-phospho-beta-D-ribosyl)imidazole-4-carboxamide + L-glutamine = D-erythro-1-(imidazol-4-yl)glycerol 3-phosphate + 5-amino-1-(5-phospho-beta-D-ribosyl)imidazole-4-carboxamide + L-glutamate + H(+). Its pathway is amino-acid biosynthesis; L-histidine biosynthesis; L-histidine from 5-phospho-alpha-D-ribose 1-diphosphate: step 5/9. In terms of biological role, IGPS catalyzes the conversion of PRFAR and glutamine to IGP, AICAR and glutamate. The HisF subunit catalyzes the cyclization activity that produces IGP and AICAR from PRFAR using the ammonia provided by the HisH subunit. This is Imidazole glycerol phosphate synthase subunit HisF from Chlorobium phaeobacteroides (strain DSM 266 / SMG 266 / 2430).